Reading from the N-terminus, the 176-residue chain is 3-hydroxydecanoyl-[acyl-carrier-protein] dehydratase (176 aa).

Residue His-70 is part of the active site.

This sequence belongs to the thioester dehydratase family. FabA subfamily. As to quaternary structure, homodimer.

The protein resides in the cytoplasm. It carries out the reaction a (3R)-hydroxyacyl-[ACP] = a (2E)-enoyl-[ACP] + H2O. It catalyses the reaction (3R)-hydroxydecanoyl-[ACP] = (2E)-decenoyl-[ACP] + H2O. The enzyme catalyses (2E)-decenoyl-[ACP] = (3Z)-decenoyl-[ACP]. Its pathway is lipid metabolism; fatty acid biosynthesis. Functionally, necessary for the introduction of cis unsaturation into fatty acids. Catalyzes the dehydration of (3R)-3-hydroxydecanoyl-ACP to E-(2)-decenoyl-ACP and then its isomerization to Z-(3)-decenoyl-ACP. Can catalyze the dehydratase reaction for beta-hydroxyacyl-ACPs with saturated chain lengths up to 16:0, being most active on intermediate chain length. The polypeptide is 3-hydroxydecanoyl-[acyl-carrier-protein] dehydratase (Alkalilimnicola ehrlichii (strain ATCC BAA-1101 / DSM 17681 / MLHE-1)).